Reading from the N-terminus, the 159-residue chain is Ribosomal RNA large subunit methyltransferase H (159 aa).

S-adenosyl-L-methionine contacts are provided by residues leucine 76, glycine 108, and 127-132 (FSKMTF).

This sequence belongs to the RNA methyltransferase RlmH family. In terms of assembly, homodimer.

Its subcellular location is the cytoplasm. The enzyme catalyses pseudouridine(1915) in 23S rRNA + S-adenosyl-L-methionine = N(3)-methylpseudouridine(1915) in 23S rRNA + S-adenosyl-L-homocysteine + H(+). In terms of biological role, specifically methylates the pseudouridine at position 1915 (m3Psi1915) in 23S rRNA. This Lachnospira eligens (strain ATCC 27750 / DSM 3376 / VPI C15-48 / C15-B4) (Eubacterium eligens) protein is Ribosomal RNA large subunit methyltransferase H.